A 218-amino-acid chain; its full sequence is N-(5'-phosphoribosyl)anthranilate isomerase (218 aa).

It belongs to the TrpF family.

It catalyses the reaction N-(5-phospho-beta-D-ribosyl)anthranilate = 1-(2-carboxyphenylamino)-1-deoxy-D-ribulose 5-phosphate. The protein operates within amino-acid biosynthesis; L-tryptophan biosynthesis; L-tryptophan from chorismate: step 3/5. This Stenotrophomonas maltophilia (strain R551-3) protein is N-(5'-phosphoribosyl)anthranilate isomerase.